The primary structure comprises 289 residues: Diaminopimelate epimerase (289 aa).

Asparagine 13, glutamine 47, and asparagine 67 together coordinate substrate. Cysteine 76 acts as the Proton donor in catalysis. Residues 77-78, asparagine 167, asparagine 200, and 218-219 contribute to the substrate site; these read GN and ER. Catalysis depends on cysteine 227, which acts as the Proton acceptor. 228–229 is a substrate binding site; that stretch reads GT.

This sequence belongs to the diaminopimelate epimerase family. Homodimer.

It is found in the cytoplasm. The catalysed reaction is (2S,6S)-2,6-diaminopimelate = meso-2,6-diaminopimelate. It participates in amino-acid biosynthesis; L-lysine biosynthesis via DAP pathway; DL-2,6-diaminopimelate from LL-2,6-diaminopimelate: step 1/1. Its function is as follows. Catalyzes the stereoinversion of LL-2,6-diaminopimelate (L,L-DAP) to meso-diaminopimelate (meso-DAP), a precursor of L-lysine and an essential component of the bacterial peptidoglycan. The sequence is that of Diaminopimelate epimerase from Burkholderia mallei (strain NCTC 10247).